The primary structure comprises 301 residues: Ribonuclease Z (301 aa).

The Zn(2+) site is built by histidine 61, histidine 63, aspartate 65, histidine 66, histidine 140, aspartate 211, and histidine 269. The Proton acceptor role is filled by aspartate 65.

Belongs to the RNase Z family. In terms of assembly, homodimer. It depends on Zn(2+) as a cofactor.

It catalyses the reaction Endonucleolytic cleavage of RNA, removing extra 3' nucleotides from tRNA precursor, generating 3' termini of tRNAs. A 3'-hydroxy group is left at the tRNA terminus and a 5'-phosphoryl group is left at the trailer molecule.. Functionally, zinc phosphodiesterase, which displays some tRNA 3'-processing endonuclease activity. Probably involved in tRNA maturation, by removing a 3'-trailer from precursor tRNA. This chain is Ribonuclease Z, found in Bradyrhizobium sp. (strain ORS 278).